The primary structure comprises 370 residues: uncharacterized protein (370 aa).

An OBG-type G domain is found at 62–293 (ATVALVGFPS…LKERMWRALG (232 aa)). GTP is bound by residues 68–75 (GFPSVGKS), 114–118 (DVPGL), and 243–246 (NKVD). Residues 293–368 (GLIRIYMDKP…EDEDVLRVVA (76 aa)) enclose the TGS domain.

This sequence belongs to the TRAFAC class OBG-HflX-like GTPase superfamily. OBG GTPase family.

This is an uncharacterized protein from Halobacterium salinarum (strain ATCC 700922 / JCM 11081 / NRC-1) (Halobacterium halobium).